Consider the following 416-residue polypeptide: Multifunctional CCA protein (416 aa).

The ATP site is built by G8 and R11. G8 and R11 together coordinate CTP. Positions 21 and 23 each coordinate Mg(2+). ATP-binding residues include R91, R137, and R140. CTP-binding residues include R91, R137, and R140. In terms of domain architecture, HD spans 228–329 (TGVHTLMVLA…VKIFDKADFW (102 aa)).

This sequence belongs to the tRNA nucleotidyltransferase/poly(A) polymerase family. Bacterial CCA-adding enzyme type 1 subfamily. In terms of assembly, monomer. Can also form homodimers and oligomers. The cofactor is Mg(2+). Requires Ni(2+) as cofactor.

The enzyme catalyses a tRNA precursor + 2 CTP + ATP = a tRNA with a 3' CCA end + 3 diphosphate. The catalysed reaction is a tRNA with a 3' CCA end + 2 CTP + ATP = a tRNA with a 3' CCACCA end + 3 diphosphate. Its function is as follows. Catalyzes the addition and repair of the essential 3'-terminal CCA sequence in tRNAs without using a nucleic acid template. Adds these three nucleotides in the order of C, C, and A to the tRNA nucleotide-73, using CTP and ATP as substrates and producing inorganic pyrophosphate. tRNA 3'-terminal CCA addition is required both for tRNA processing and repair. Also involved in tRNA surveillance by mediating tandem CCA addition to generate a CCACCA at the 3' terminus of unstable tRNAs. While stable tRNAs receive only 3'-terminal CCA, unstable tRNAs are marked with CCACCA and rapidly degraded. In Shewanella baltica (strain OS155 / ATCC BAA-1091), this protein is Multifunctional CCA protein.